Consider the following 547-residue polypeptide: Glucose-6-phosphate isomerase (547 aa).

Glutamate 352 functions as the Proton donor in the catalytic mechanism. Residues histidine 383 and lysine 511 contribute to the active site.

This sequence belongs to the GPI family.

It is found in the cytoplasm. It carries out the reaction alpha-D-glucose 6-phosphate = beta-D-fructose 6-phosphate. It participates in carbohydrate biosynthesis; gluconeogenesis. The protein operates within carbohydrate degradation; glycolysis; D-glyceraldehyde 3-phosphate and glycerone phosphate from D-glucose: step 2/4. Functionally, catalyzes the reversible isomerization of glucose-6-phosphate to fructose-6-phosphate. The polypeptide is Glucose-6-phosphate isomerase (Magnetococcus marinus (strain ATCC BAA-1437 / JCM 17883 / MC-1)).